A 196-amino-acid polypeptide reads, in one-letter code: Peptidyl-tRNA hydrolase (196 aa).

Tyrosine 18 contributes to the tRNA binding site. Histidine 23 acts as the Proton acceptor in catalysis. Positions 69, 71, and 117 each coordinate tRNA.

The protein belongs to the PTH family. As to quaternary structure, monomer.

The protein resides in the cytoplasm. The catalysed reaction is an N-acyl-L-alpha-aminoacyl-tRNA + H2O = an N-acyl-L-amino acid + a tRNA + H(+). Hydrolyzes ribosome-free peptidyl-tRNAs (with 1 or more amino acids incorporated), which drop off the ribosome during protein synthesis, or as a result of ribosome stalling. Functionally, catalyzes the release of premature peptidyl moieties from peptidyl-tRNA molecules trapped in stalled 50S ribosomal subunits, and thus maintains levels of free tRNAs and 50S ribosomes. The polypeptide is Peptidyl-tRNA hydrolase (Vibrio vulnificus (strain CMCP6)).